Reading from the N-terminus, the 161-residue chain is Cyclic pyranopterin monophosphate synthase (161 aa).

Residues 75–77 (LCH) and 113–114 (ME) each bind substrate. Residue Asp128 is part of the active site.

The protein belongs to the MoaC family. Homohexamer; trimer of dimers.

The enzyme catalyses (8S)-3',8-cyclo-7,8-dihydroguanosine 5'-triphosphate = cyclic pyranopterin phosphate + diphosphate. Its pathway is cofactor biosynthesis; molybdopterin biosynthesis. In terms of biological role, catalyzes the conversion of (8S)-3',8-cyclo-7,8-dihydroguanosine 5'-triphosphate to cyclic pyranopterin monophosphate (cPMP). This Salmonella heidelberg (strain SL476) protein is Cyclic pyranopterin monophosphate synthase.